Consider the following 291-residue polypeptide: Tetrahydromethanopterin:alpha-L-glutamate ligase (291 aa).

Residues 101 to 286 (SVFLELNNLP…IADKLLEKII (186 aa)) enclose the ATP-grasp domain. ATP is bound by residues Lys136, 175 to 187 (QEFI…EHRD), and Arg203. Residues Asp247, Glu259, and Asn261 each contribute to the Mg(2+) site. Mn(2+) is bound by residues Asp247, Glu259, and Asn261.

Belongs to the RimK family. MptN subfamily. In terms of assembly, homodimer. It depends on Mg(2+) as a cofactor. The cofactor is Mn(2+).

The catalysed reaction is 5,6,7,8-tetrahydromethanopterin + L-glutamate + ATP = 5,6,7,8-tetrahydrosarcinapterin + ADP + phosphate + H(+). It functions in the pathway cofactor biosynthesis; 5,6,7,8-tetrahydrosarcinapterin biosynthesis. Functionally, catalyzes the ATP or GTP-dependent addition of one L-glutamate molecule to tetrahydromethanopterin, producing tetrahydrosarcinapterin. This is Tetrahydromethanopterin:alpha-L-glutamate ligase (mptN) from Methanocaldococcus jannaschii (strain ATCC 43067 / DSM 2661 / JAL-1 / JCM 10045 / NBRC 100440) (Methanococcus jannaschii).